The sequence spans 201 residues: Probable nicotinate-nucleotide adenylyltransferase (201 aa).

The protein belongs to the NadD family.

The enzyme catalyses nicotinate beta-D-ribonucleotide + ATP + H(+) = deamido-NAD(+) + diphosphate. Its pathway is cofactor biosynthesis; NAD(+) biosynthesis; deamido-NAD(+) from nicotinate D-ribonucleotide: step 1/1. Its function is as follows. Catalyzes the reversible adenylation of nicotinate mononucleotide (NaMN) to nicotinic acid adenine dinucleotide (NaAD). The sequence is that of Probable nicotinate-nucleotide adenylyltransferase from Carboxydothermus hydrogenoformans (strain ATCC BAA-161 / DSM 6008 / Z-2901).